Reading from the N-terminus, the 442-residue chain is Cytokine receptor-like factor 3 (442 aa).

The stretch at 10 to 46 forms a coiled coil; the sequence is EVLLQEARENVEAAQSYRRELGQRLQGLREAQRQIKE. Positions 181 to 274 constitute a Fibronectin type-III domain; that stretch reads PPVQIEELIE…PQTGHSTLVP (94 aa).

It belongs to the cytokine receptor-like factor 3 family.

The protein localises to the cytoplasm. Its function is as follows. May play a role in the negative regulation of cell cycle progression. This Mus musculus (Mouse) protein is Cytokine receptor-like factor 3 (Crlf3).